The sequence spans 1314 residues: Enfumafungin synthase efuA (1314 aa).

Residues 1-680 are terpenne cyclase; it reads MPSYHNTDKT…RYIDKASRQG (680 aa). 2 PFTB repeats span residues 19 to 62 and 66 to 107; these read LQQA…ELSL and GPEI…RILG. 3 helical membrane-spanning segments follow: residues 133–153, 155–175, and 230–250; these read FFTR…IPQM, AELI…SSWA, and YQWI…FGGL. One copy of the PFTB 3 repeat lies at 260–300; the sequence is LKRCTAWLLEHQEESGDWAGFFPPIHGSIWALLLDGFSFQS. D395 acts as the Proton donor in catalysis. PFTB repeat units lie at residues 417–458 and 546–597; these read VMNG…DSLV and CMRT…LRFR. The segment at 681–1314 is glycosyltransferase; it reads IETLRIPSSS…ADSVLDIEEK (634 aa). A helical transmembrane segment spans residues 1200–1220; it reads AIVQLLYGFTTTILALFGWLK. The segment at 1289 to 1314 is disordered; the sequence is DSGASESSRSSLDGGHADSVLDIEEK. The span at 1292–1302 shows a compositional bias: low complexity; it reads ASESSRSSLDG.

This sequence in the N-terminal section; belongs to the terpene cyclase/mutase family. It in the C-terminal section; belongs to the glycosyltransferase 28 family.

It is found in the membrane. It participates in secondary metabolite biosynthesis; terpenoid biosynthesis. Its function is as follows. Terpene cyclase-glycosyl transferase fusion protein; part of the gene cluster that mediates the biosynthesis of enfumafungin, a glycosylated fernene-type triterpenoid with potent antifungal activity, mediated by its interaction with beta-1,3-glucan synthase and the fungal cell wall. The pathway begins with the terpene cyclase-glycosyl transferase fusion protein that most likely uses 2,3-oxidosqualene as substrate and catalyzes glycosylation immediately after cyclization. The fernene glycoside then could be processed by the desaturase efuI which catalyzes isomerization of a double bond established by efuA to form the core structure. The latter would then undergo a series of hydroxylations in unknown order at C-2, C-19, C-23 and C-25, which would be catalyzed by two of the three cytochrome P450 monooxygenases efuB, efuG or efuH. The hydroxy-group at C-25 becomes oxidized by the dehydrogenase efuE to enable a spontaneous, non-enzymatic hemiacetal formation with C-23. After hydroxylation at C-2, acetylation by the acetyltransferase efuC takes place. The final steps in enfumafungin biosynthesis require expansion of the 5-membered ring by lactonization via a Baeyer-Villiger reaction mediated by one of the BGC's cytochrome P450 monooxygenases (efuB, efuG or efuH) followed by ring cleavage. This type of reaction would establish a double bond between C-20 and C-21 which could be reduced by the reductase efuL to form the final product. The protein is Enfumafungin synthase efuA of Hormonema carpetanum.